The sequence spans 895 residues: WD repeat-containing protein 36 (895 aa).

WD repeat units follow at residues 30-63 (VVRF…LVAV), 72-101 (CCMA…IVHT), 110-143 (HFLQ…LQLT), 152-186 (SAIL…LLYT), 193-230 (GVTA…MKFR), 237-272 (TSIS…INQM), 277-320 (STAI…RFRM), and 327-361 (TNIR…FNKS). 2 positions are modified to phosphoserine: Ser-382 and Ser-399. 6 WD repeats span residues 389–428 (TKFA…GAYF), 441–475 (ATAV…HRGS), 486–522 (VRGV…HSVS), 527–562 (PNIM…VREF), 564–605 (GHQG…DCFL), and 607–645 (DSAP…SVVS).

As to quaternary structure, part of the small subunit (SSU) processome, composed of more than 70 proteins and the RNA chaperone small nucleolar RNA (snoRNA) U3. Expressed in heart, placenta, liver, skeletal muscle, kidney and pancreas. In ocular tissues, strong expression in iris, sclera, ciliary muscle, ciliary body, retina and optic nerve.

Its subcellular location is the nucleus. It localises to the nucleolus. Part of the small subunit (SSU) processome, first precursor of the small eukaryotic ribosomal subunit. During the assembly of the SSU processome in the nucleolus, many ribosome biogenesis factors, an RNA chaperone and ribosomal proteins associate with the nascent pre-rRNA and work in concert to generate RNA folding, modifications, rearrangements and cleavage as well as targeted degradation of pre-ribosomal RNA by the RNA exosome. Involved in the nucleolar processing of SSU 18S rRNA. Involved in T-cell activation and highly coregulated with IL2. This Homo sapiens (Human) protein is WD repeat-containing protein 36.